Here is a 520-residue protein sequence, read N- to C-terminus: MSAPADTLKSALDRTFASLRHGLETYTAQLTPHEVGTITRVSTGIAMVSGLPGVGFEELVSFSGNVFGIAFNVDETEIGVVLLGDYGHLHAGDPVRRTGRVMDVAVGEGLLGRVIDPLGRPLDSLGPVVSSARLALERPAAPIMDRAPVTVPLQTGLKVVDALIPIGRGQRELILGDRQTGKTAIAVDTILNQRGQDVLCVYCAIGQRAAAVARTIAVLREKGAMEYTVVVVTEGNDPPGLAYIAPYAATSIAEHFMEMGRDVLVVYDDLTQHARAYRELSLLLRRPPGREAFPGDIFYIHSRLLERATHLRPERGGGSLTALPIIETEAQNMSAYIPTNLISITDGQIYLSPSLFELGVLPAVDVSKSVSRVGGKAQRAAYRAVTGDLKLAYAQFEELETFARFGARLDENTQKIIEHGRRIRACLQQPESAPVSMAGQITVLLALTAAFFDGVPLARMTAAEQAVLQAAATLPAELQTRFDTAMKLSEADRATLIQLARDALKPFVPPPAESRRTSAP.

176–183 contacts ATP; it reads GDRQTGKT.

This sequence belongs to the ATPase alpha/beta chains family. In terms of assembly, F-type ATPases have 2 components, CF(1) - the catalytic core - and CF(0) - the membrane proton channel. CF(1) has five subunits: alpha(3), beta(3), gamma(1), delta(1), epsilon(1). CF(0) has three main subunits: a(1), b(2) and c(9-12). The alpha and beta chains form an alternating ring which encloses part of the gamma chain. CF(1) is attached to CF(0) by a central stalk formed by the gamma and epsilon chains, while a peripheral stalk is formed by the delta and b chains.

Its subcellular location is the cell inner membrane. It carries out the reaction ATP + H2O + 4 H(+)(in) = ADP + phosphate + 5 H(+)(out). Produces ATP from ADP in the presence of a proton gradient across the membrane. The alpha chain is a regulatory subunit. This chain is ATP synthase subunit alpha 2, found in Polaromonas naphthalenivorans (strain CJ2).